A 199-amino-acid chain; its full sequence is MENKGNMELSNSYGFYKNGRRVSFVKATSEQSLDEATFIEKGSAQAFYHSLFENDRDNSHTMNSKRDEAGFACEVCQIYIPNSKKINHFKSMTHLLSSQHISNKFQPHLLKPKSLGYRVLSQYGWSPQGDTAGLGLENQGRRAPVRAFRVKNDTIGLGTKIDLEKVAVNKCRKGKRQCQIQHSKDVRLKEALIKHFSSN.

A G-patch domain is found at 112–160; the sequence is PKSLGYRVLSQYGWSPQGDTAGLGLENQGRRAPVRAFRVKNDTIGLGTK.

This is an uncharacterized protein from Schizosaccharomyces pombe (strain 972 / ATCC 24843) (Fission yeast).